The chain runs to 252 residues: Type III pantothenate kinase (252 aa).

6–13 provides a ligand contact to ATP; the sequence is DIGNTNTV. 105-108 is a substrate binding site; sequence GADR. The Proton acceptor role is filled by D107. K(+) is bound at residue D127. T130 contacts ATP. T182 is a binding site for substrate.

It belongs to the type III pantothenate kinase family. Homodimer. Requires NH4(+) as cofactor. It depends on K(+) as a cofactor.

Its subcellular location is the cytoplasm. It carries out the reaction (R)-pantothenate + ATP = (R)-4'-phosphopantothenate + ADP + H(+). It functions in the pathway cofactor biosynthesis; coenzyme A biosynthesis; CoA from (R)-pantothenate: step 1/5. Functionally, catalyzes the phosphorylation of pantothenate (Pan), the first step in CoA biosynthesis. The chain is Type III pantothenate kinase from Salinispora arenicola (strain CNS-205).